A 352-amino-acid polypeptide reads, in one-letter code: Chorismate synthase (352 aa).

Arg-48 contributes to the NADP(+) binding site. Residues 125–127 (RSS), 238–239 (NA), Gly-278, 293–297 (KPTSS), and Arg-319 contribute to the FMN site.

The protein belongs to the chorismate synthase family. In terms of assembly, homotetramer. The cofactor is FMNH2.

It carries out the reaction 5-O-(1-carboxyvinyl)-3-phosphoshikimate = chorismate + phosphate. It functions in the pathway metabolic intermediate biosynthesis; chorismate biosynthesis; chorismate from D-erythrose 4-phosphate and phosphoenolpyruvate: step 7/7. Catalyzes the anti-1,4-elimination of the C-3 phosphate and the C-6 proR hydrogen from 5-enolpyruvylshikimate-3-phosphate (EPSP) to yield chorismate, which is the branch point compound that serves as the starting substrate for the three terminal pathways of aromatic amino acid biosynthesis. This reaction introduces a second double bond into the aromatic ring system. This is Chorismate synthase from Legionella pneumophila (strain Lens).